The primary structure comprises 151 residues: HTH-type transcriptional regulator TcaR (151 aa).

The HTH marR-type domain occupies 1 to 142; it reads MVKHLQDHIQ…VRQVLEVINH (142 aa). Residues 54–77 constitute a DNA-binding region (H-T-H motif); that stretch reads ISEITQRQGVNKAAVSRRIKKLID.

Its function is as follows. Involved in the antibiotic teicoplanin susceptibility. Inactivation of the tcaRAB operon leads to teicoplanin resistance. Is a weak negative regulator of transcription of the icaABD operon. The chain is HTH-type transcriptional regulator TcaR (tcaR) from Staphylococcus aureus (strain COL).